The chain runs to 43 residues: Parvalbumin beta (43 aa).

EF-hand domains lie at 1-20 (KVFE…LKLF) and 22-43 (LSSA…ALVK). Residues aspartate 7, aspartate 9, serine 11, phenylalanine 12, glutamate 14, glutamate 16, and glutamate 37 each contribute to the Ca(2+) site.

Detected in muscle and cutaneous mucus. In the skin, detected in cells in the basal region of the glandular epithelium of the dermal mucus glands (at protein level).

Its subcellular location is the cytoplasm. It localises to the secreted. In terms of biological role, in muscle, parvalbumin is thought to be involved in relaxation after contraction. It binds two calcium ions. This Rana temporaria (European common frog) protein is Parvalbumin beta.